Here is a 2144-residue protein sequence, read N- to C-terminus: MFNMPRGVTKSKSKRGKIKMENDMAAAATTTACTLGHICVLCRQEMLLDTCCCRQAVEAVDSPASSEEAYSSSNSSSCQASSEISAEEVWFLSHDDIVLCRRPKFDEVETTGKKRDVKCSGHQCSNECDDGSTKNNRQQRENFNIFSNCHNILRTLQSLLLLMFNCGIFNKRRRRQHQQQHHHHYQHHHQQHHQQHHQRQQANVSYTKFLLLLQTLAAATTRLSLSPKNYKQQQQLQHNQQLPRATPQQKQQEKDRHKCFHYKHNYSYSPGISLLLFILLANTLAIQAVVLPAHQQHLLHNDIADGLDKTALSVSGTQSRWTRSESNPTMRLSQNVKPCKSMDIRNMVSHFNQLENCTVIEGFLLIDLINDASPLNRSFPKLTEVTDYIIIYRVTGLHSLSKIFPNLSVIRGNKLFDGYALVVYSNFDLMDLGLHKLRSITRGGVRIEKNHKLCYDRTIDWLEILAENETQLVVLTENGKEKECRLSKCPGEIRIEEGHDTTAIEGELNASCQLHNNRRLCWNSKLCQTKCPEKCRNNCIDEHTCCSQDCLGGCVIDKNGNESCISCRNVSFNNICMDSCPKGYYQFDSRCVTANECITLTKFETNSVYSGIPYNGQCITHCPTGYQKSENKRMCEPCPGGKCDKECSSGLIDSLERAREFHGCTIITGTEPLTISIKRESGAHVMDELKYGLAAVHKIQSSLMVHLTYGLKSLKFFQSLTEISGDPPMDADKYALYVLDNRDLDELWGPNQTVFIRKGGVFFHFNPKLCVSTINQLLPMLASKPKFFEKSDVGADSNGNRGSCGTAVLNVTLQSVGANSAMLNVTTKVEIGEPQKPSNATIVFKDPRAFIGFVFYHMIDPYGNSTKSSDDPCDDRWKVSSPEKSGVMVLSNLIPYTNYSYYVRTMAISSELTNAESDVKNFRTNPGRPSKVTEVVATAISDSKINVTWSYLDKPYGVLTRYFIKAKLINRPTRNNNRDYCTEPLVKAMENDLPATTPTKKISDPLAGDCKCVEGSKKTSSQEYDDRKVQAGMEFENALQNFIFVPNIRKSKNGSSDKSDGAEGAALDSNAIPNGGATNPSRRRRDVALEPELDDVEGSVLLRHVRSITDDTDAFFEKDDENTYKDEEDLSSNKQFYEVFAKELPPNQTHFVFEKLRHFTRYAIFVVACREEIPSEKLRDTSFKKSLCSDYDTVFQTTKRKKFADIVMDLKVDLEHANNTESPVRVRWTPPVDPNGEIVTYEVAYKLQKPDQVEEKKCIPAADFNQTAGYLIKLNEGLYSFRVRANSIAGYGDFTEVEHIKVEPPPSYAKVFFWLLGIGLAFLIVSLFGYVCYLHKRKVPSNDLHMNTEVNPFYASMQYIPDDWEVLRENIIQLAPLGQGSFGMVYEGILKSFPPNGVDRECAIKTVNENATDRERTNFLSEASVMKEFDTYHVVRLLGVCSRGQPALVVMELMKKGDLKSYLRAHRPEERDEAMMTYLNRIGVTGNVQPPTYGRIYQMAIEIADGMAYLAAKKFVHRDLAARNCMVADDLTVKIGDFGMTRDIYETDYYRKGTKGLLPVRWMPPESLRDGVYSSASDVFSFGVVLWEMATLAAQPYQGLSNEQVLRYVIDGGVMERPENCPDFLHKLMQRCWHHRSSARPSFLDIIAYLEPQCPNSQFKEVSFYHSEAGLQHREKERKERNQLDAFAAVPLDQDLQDREQQEDATTPLRMGDYQQNSSLDQPPESPIAMVDDQGSHLPFSLPSGFIASSTPDGQTVMATAFQNIPAAQGDISATYVVPDADALDGDRGYEIYDPSPKCAELPTSRSGSTGGGKLSGEQHLLPRKGRQPTIMSSSMPDDVIGGSSLQPSTASAGSSNASSHTGRPSLKKTVADSVRNKANFINRHLFNHKRTGSNASHKSNASNAPSTSSNTNLTSHPVAMGNLGTIESGGSGSAGSYTGTPRFYTPSATPGGGSGMAISDNPNYRLLDESIASEQATILTTSSPNPNYEMMHPPTSLVSTNPNYMPMNETPVQMAGVTISHNPNYQPMQAPLNARQSQSSSDEDNEQEEDDEDEDDDVDDEHVEHIKMERMPLSRPRQRALPSKTQPPRSRSVSQTRKSPTNPNSGIGATGAGNRSNLLKENWLRPASTPRPPPPNGFIGREA.

The signal sequence occupies residues M1–R43. Residue N74 is glycosylated (N-linked (GlcNAc...) asparagine). Positions R174–R199 are enriched in basic residues. Residues R174–Q200 are disordered. The N-linked (GlcNAc...) asparagine glycan is linked to N203. Residues N229–R256 are disordered. Residues Q232–L242 are compositionally biased toward low complexity. N-linked (GlcNAc...) asparagine glycans are attached at residues N265, N356, N376, N406, N468, and N509. Disulfide bonds link C531-C539, C535-C545, C546-C554, C550-C564, C567-C576, C580-C591, C597-C618, and C635-C638. Residues E542–Q586 form an FU repeat. 2 N-linked (GlcNAc...) asparagine glycosylation sites follow: N561 and N569. 11 N-linked (GlcNAc...) asparagine glycosylation sites follow: N751, N810, N824, N839, N864, N898, N946, N1053, N1147, N1218, and N1265. Fibronectin type-III domains are found at residues V825–G927 and R928–D1026. The disordered stretch occupies residues N1053 to R1084. The Fibronectin type-III 3 domain occupies L1210–P1305. The chain crosses the membrane as a helical span at residues V1311–V1331. Over C1332–A2144 the chain is Cytoplasmic. The tract at residues N1351–Y1354 is chico-binding. At Y1354 the chain carries Phosphotyrosine; by autocatalysis. The region spanning I1371–F1659 is the Protein kinase domain. ATP-binding positions include L1377–V1385 and K1405. The active-site Proton acceptor is the D1519. Residues Y1545, Y1549, and Y1550 each carry the phosphotyrosine; by autocatalysis modification. 4 disordered regions span residues V1690–P1724, R1788–V1871, L1886–N1962, and I2020–A2144. S1816 bears the Phosphoserine mark. Composition is skewed to low complexity over residues S1849 to S1860 and S1894 to S1916. The span at S2042–E2062 shows a compositional bias: acidic residues. Residues H2063 to P2073 are compositionally biased toward basic and acidic residues. The segment covering S2084–L2120 has biased composition (polar residues).

The protein belongs to the protein kinase superfamily. Tyr protein kinase family. Insulin receptor subfamily. Tetramer of 2 alpha and 2 beta chains linked by disulfide bonds. The alpha chains contribute to the formation of the ligand-binding domain, while the beta chains carry the kinase domain. Interacts (via C-terminal cytoplasmic region) with dock/dreadlocks (via SH2 and SH3 domains); when autophosphorylated. May interact (via beta subunit) with chico/IRS-1; this interaction may lead to tyrosine phosphorylation of the insulin receptor substrate chico. Interacts with Elp6; the interaction may stabilize Elp6. The cofactor is Mn(2+). The 280 kDa proreceptor is proteolytically processed to form a 120 kDa alpha subunit and a 170 kDa beta subunit. The beta subunit undergoes cell-specific cleavage to generate a 90 kDa beta subunit and a free 60 kDa C-terminal subunit. Both the 90 kDa and the 170 kDa beta subunits can assemble with the alpha subunits to form mature receptors. Post-translationally, autophosphorylated on tyrosine residues, including Tyr-1549 and Tyr-1550, in response to exogenous insulin. Tyr-1549 and Tyr-1550 are dephosphorylated by Ptp61F recruited by the dock/dreadlocks adapter protein. In terms of processing, phosphorylation of Tyr-1354 is required for Chico-binding.

The protein localises to the membrane. It localises to the cell projection. Its subcellular location is the axon. The protein resides in the growth cone membrane. It carries out the reaction L-tyrosyl-[protein] + ATP = O-phospho-L-tyrosyl-[protein] + ADP + H(+). Activated in response to insulin. Autophosphorylation activates the kinase activity. Functionally, has a ligand-stimulated tyrosine-protein kinase activity. Binds 3 insulin-like peptide ligands. Regulates cell number and cell size during development by regulating cell growth and survival, affecting body size and organ size, including ovaries and imaginal disks. Plays a role in life-span determination. May be involved in regulation of other neuroendocrine signaling pathways. Involved in the development of the embryonic nervous system. Functions upstream of dock/dreadlocks for photoreceptor (R cell) axon guidance and targeting in the visual system. Involved in the acs mediated recovery of gut enterocytes following the cytoplasmic purge response to intestinal bacterial infection. The sequence is that of Insulin-like receptor from Drosophila melanogaster (Fruit fly).